The chain runs to 271 residues: 4-diphosphocytidyl-2-C-methyl-D-erythritol kinase (271 aa).

Lys-8 is a catalytic residue. 90–100 provides a ligand contact to ATP; sequence PFGAGLGGGSA. Asp-132 is a catalytic residue.

It belongs to the GHMP kinase family. IspE subfamily.

It carries out the reaction 4-CDP-2-C-methyl-D-erythritol + ATP = 4-CDP-2-C-methyl-D-erythritol 2-phosphate + ADP + H(+). The protein operates within isoprenoid biosynthesis; isopentenyl diphosphate biosynthesis via DXP pathway; isopentenyl diphosphate from 1-deoxy-D-xylulose 5-phosphate: step 3/6. In terms of biological role, catalyzes the phosphorylation of the position 2 hydroxy group of 4-diphosphocytidyl-2C-methyl-D-erythritol. The sequence is that of 4-diphosphocytidyl-2-C-methyl-D-erythritol kinase from Parabacteroides distasonis (strain ATCC 8503 / DSM 20701 / CIP 104284 / JCM 5825 / NCTC 11152).